Here is a 310-residue protein sequence, read N- to C-terminus: GTPase Era (310 aa).

One can recognise an Era-type G domain in the interval 17-184 (HSGFVALIGA…LDYLAQALPA (168 aa)). The G1 stretch occupies residues 25 to 32 (GAPNAGKS). Position 25–32 (25–32 (GAPNAGKS)) interacts with GTP. A G2 region spans residues 51–55 (QTTRA). The tract at residues 72-75 (DTPG) is G3. GTP-binding positions include 72-76 (DTPGI) and 134-137 (NKVD). The G4 stretch occupies residues 134–137 (NKVD). A G5 region spans residues 163–165 (VSA). The 78-residue stretch at 215-292 (LHQELPYSSH…HLFLFVKVRE (78 aa)) folds into the KH type-2 domain.

Belongs to the TRAFAC class TrmE-Era-EngA-EngB-Septin-like GTPase superfamily. Era GTPase family. As to quaternary structure, monomer.

It localises to the cytoplasm. The protein localises to the cell inner membrane. In terms of biological role, an essential GTPase that binds both GDP and GTP, with rapid nucleotide exchange. Plays a role in 16S rRNA processing and 30S ribosomal subunit biogenesis and possibly also in cell cycle regulation and energy metabolism. The chain is GTPase Era from Mesorhizobium japonicum (strain LMG 29417 / CECT 9101 / MAFF 303099) (Mesorhizobium loti (strain MAFF 303099)).